We begin with the raw amino-acid sequence, 317 residues long: Putative carboxypeptidase RP402 (317 aa).

Catalysis depends on Ser125, which acts as the Nucleophile. Active-site charge relay system residues include Glu225 and His288.

The protein belongs to the peptidase S66 family.

The chain is Putative carboxypeptidase RP402 from Rickettsia prowazekii (strain Madrid E).